The following is a 165-amino-acid chain: Transcriptional repressor NrdR (165 aa).

A zinc finger spans residues 3 to 34; the sequence is CPYCGQLNNRVVDSRLSRSEFAVRRRRECLDC. The ATP-cone domain occupies 49 to 139; sequence VMVVKKDGRR…VYREFKDVDD (91 aa).

Belongs to the NrdR family. Zn(2+) is required as a cofactor.

Functionally, negatively regulates transcription of bacterial ribonucleotide reductase nrd genes and operons by binding to NrdR-boxes. This is Transcriptional repressor NrdR from Desulforapulum autotrophicum (strain ATCC 43914 / DSM 3382 / VKM B-1955 / HRM2) (Desulfobacterium autotrophicum).